Reading from the N-terminus, the 448-residue chain is UDP-N-acetylmuramoylalanine--D-glutamate ligase (448 aa).

112–118 provides a ligand contact to ATP; sequence GSNAKST.

The protein belongs to the MurCDEF family.

Its subcellular location is the cytoplasm. It carries out the reaction UDP-N-acetyl-alpha-D-muramoyl-L-alanine + D-glutamate + ATP = UDP-N-acetyl-alpha-D-muramoyl-L-alanyl-D-glutamate + ADP + phosphate + H(+). It participates in cell wall biogenesis; peptidoglycan biosynthesis. Its function is as follows. Cell wall formation. Catalyzes the addition of glutamate to the nucleotide precursor UDP-N-acetylmuramoyl-L-alanine (UMA). This is UDP-N-acetylmuramoylalanine--D-glutamate ligase from Acinetobacter baumannii (strain ACICU).